Consider the following 272-residue polypeptide: SWIRM domain-containing protein laf2 (272 aa).

The segment at 86-148 is disordered; that stretch reads HVGRWANRHS…RRRKSARGNG (63 aa). 2 stretches are compositionally biased toward low complexity: residues 95–120 and 127–136; these read SNVS…SYSG and RSISSSPSTI. 2 positions are modified to phosphoserine: serine 130 and serine 132. Phosphothreonine is present on threonine 135. Residues 182-272 enclose the SWIRM domain; the sequence is LKAEWKGPPL…AFHEVGFFDD (91 aa).

As to quaternary structure, component of the RPD3C(L) complex.

The protein resides in the nucleus. Its function is as follows. Component of the RPD3C(L) histone deacetylase complex (HDAC) responsible for the deacetylation of lysine residues on the N-terminal part of the core histones (H2A, H2B, H3 and H4). Histone deacetylation gives a tag for epigenetic repression and plays an important role in transcriptional regulation, cell cycle progression and developmental events. This is SWIRM domain-containing protein laf2 (laf2) from Schizosaccharomyces pombe (strain 972 / ATCC 24843) (Fission yeast).